A 387-amino-acid polypeptide reads, in one-letter code: Aminodeoxyfutalosine synthase (387 aa).

One can recognise a Radical SAM core domain in the interval 52-279 (VHFNVNRHLN…ARTQMATGAE (228 aa)). [4Fe-4S] cluster-binding residues include cysteine 66, cysteine 70, and cysteine 73.

The protein belongs to the radical SAM superfamily. MqnE family. The cofactor is [4Fe-4S] cluster.

The enzyme catalyses 3-[(1-carboxyvinyl)-oxy]benzoate + S-adenosyl-L-methionine + H2O = 6-amino-6-deoxyfutalosine + hydrogencarbonate + L-methionine + H(+). It functions in the pathway quinol/quinone metabolism; menaquinone biosynthesis. Radical SAM enzyme that catalyzes the addition of the adenosyl radical to the double bond of 3-[(1-carboxyvinyl)oxy]benzoate, leading to aminodeoxyfutalosine (AFL), a key intermediate in the formation of menaquinone (MK, vitamin K2) from chorismate. The polypeptide is Aminodeoxyfutalosine synthase (Streptomyces coelicolor (strain ATCC BAA-471 / A3(2) / M145)).